A 545-amino-acid polypeptide reads, in one-letter code: Threonine--tRNA ligase catalytic subunit (545 aa).

The segment at 139–433 (DHRLIGEKLD…LLEHFKGKLP (295 aa)) is catalytic. Zn(2+) contacts are provided by cysteine 231, histidine 282, and histidine 410.

This sequence belongs to the class-II aminoacyl-tRNA synthetase family. Homodimer. Probably interacts with its editing subunit. Requires Zn(2+) as cofactor.

It localises to the cytoplasm. It catalyses the reaction tRNA(Thr) + L-threonine + ATP = L-threonyl-tRNA(Thr) + AMP + diphosphate + H(+). Functionally, catalyzes the attachment of threonine to tRNA(Thr) in a two-step reaction: L-threonine is first activated by ATP to form Thr-AMP and then transferred to the acceptor end of tRNA(Thr). Also activates L-serine and transfers it to tRNA(Thr) but cannot deacylate incorrectly charged amino acid; unlike most archaea the editing function is found in a freestanding protein. The chain is Threonine--tRNA ligase catalytic subunit from Saccharolobus islandicus (strain Y.G.57.14 / Yellowstone #1) (Sulfolobus islandicus).